Consider the following 287-residue polypeptide: Glycine--tRNA ligase alpha subunit (287 aa).

It belongs to the class-II aminoacyl-tRNA synthetase family. As to quaternary structure, tetramer of two alpha and two beta subunits.

The protein resides in the cytoplasm. It carries out the reaction tRNA(Gly) + glycine + ATP = glycyl-tRNA(Gly) + AMP + diphosphate. The sequence is that of Glycine--tRNA ligase alpha subunit from Campylobacter jejuni subsp. doylei (strain ATCC BAA-1458 / RM4099 / 269.97).